A 566-amino-acid polypeptide reads, in one-letter code: Cyclin-dependent kinase-like 2 (566 aa).

In terms of domain architecture, Protein kinase spans 4–287; that stretch reads YENLGLVGEG…CAELLHHDFF (284 aa). ATP-binding positions include 10 to 18 and K33; that span reads VGEGSYGMV. The [NKR]KIAxRE signature appears at 45–51; it reads KKIAMRE. D126 serves as the catalytic Proton acceptor. Disordered regions lie at residues 307 to 334 and 545 to 566; these read DARN…GEER and QVSG…EHQH. The segment covering 320–334 has biased composition (basic and acidic residues); sequence RKKEKEKDDSLGEER.

This sequence belongs to the protein kinase superfamily. CMGC Ser/Thr protein kinase family. CDC2/CDKX subfamily.

It is found in the cytoplasm. It localises to the nucleus. It catalyses the reaction L-seryl-[protein] + ATP = O-phospho-L-seryl-[protein] + ADP + H(+). It carries out the reaction L-threonyl-[protein] + ATP = O-phospho-L-threonyl-[protein] + ADP + H(+). This is Cyclin-dependent kinase-like 2 from Oryctolagus cuniculus (Rabbit).